We begin with the raw amino-acid sequence, 182 residues long: uncharacterized protein (182 aa).

One can recognise a Macro domain in the interval 1–170 (MIVKIIKGDI…IFVNIFEREL (170 aa)).

This is an uncharacterized protein from Sulfurisphaera tokodaii (strain DSM 16993 / JCM 10545 / NBRC 100140 / 7) (Sulfolobus tokodaii).